Consider the following 236-residue polypeptide: Leucyl/phenylalanyl-tRNA--protein transferase (236 aa).

Belongs to the L/F-transferase family.

It localises to the cytoplasm. The catalysed reaction is N-terminal L-lysyl-[protein] + L-leucyl-tRNA(Leu) = N-terminal L-leucyl-L-lysyl-[protein] + tRNA(Leu) + H(+). The enzyme catalyses N-terminal L-arginyl-[protein] + L-leucyl-tRNA(Leu) = N-terminal L-leucyl-L-arginyl-[protein] + tRNA(Leu) + H(+). It catalyses the reaction L-phenylalanyl-tRNA(Phe) + an N-terminal L-alpha-aminoacyl-[protein] = an N-terminal L-phenylalanyl-L-alpha-aminoacyl-[protein] + tRNA(Phe). Functions in the N-end rule pathway of protein degradation where it conjugates Leu, Phe and, less efficiently, Met from aminoacyl-tRNAs to the N-termini of proteins containing an N-terminal arginine or lysine. This chain is Leucyl/phenylalanyl-tRNA--protein transferase, found in Idiomarina loihiensis (strain ATCC BAA-735 / DSM 15497 / L2-TR).